We begin with the raw amino-acid sequence, 316 residues long: Nucleotide-binding protein Sala_2050 (316 aa).

18–25 (GLSGAGKS) provides a ligand contact to ATP. 69 to 72 (DSRS) provides a ligand contact to GTP. Positions 283-316 (GYEPTLTHRNLDSAPQDGLEGKPPSAARASGGAR) are disordered.

The protein belongs to the RapZ-like family.

In terms of biological role, displays ATPase and GTPase activities. The protein is Nucleotide-binding protein Sala_2050 of Sphingopyxis alaskensis (strain DSM 13593 / LMG 18877 / RB2256) (Sphingomonas alaskensis).